The sequence spans 374 residues: Proton-coupled zinc antiporter SLC30A8 (374 aa).

Residues 1-67 (MKGSEEAYLV…QREQTFAKKK (67 aa)) are Cytoplasmic-facing. Positions 18–48 (YSLTKDSEKNHPSKPPLQDEENPQSKYHCHN) are disordered. 3 residues coordinate Zn(2+): histidine 45, cysteine 46, and histidine 47. Residues 45–47 (HCH) carry the HCH Motif; seals regulatory zinc-binding pocket motif. A helical transmembrane segment spans residues 68-88 (LCIASLICFVFISAEIVGGYI). The Lumenal, vesicle segment spans residues 89-91 (AGS). The helical transmembrane segment at 92–112 (LAVVTDAAHLLVDLSSFFISL) threads the bilayer. Positions 100, 104, and 131 each coordinate Zn(2+). The Cytoplasmic segment spans residues 113 to 134 (CSLWLSSKSSTTRLTFGWHRAE). A helical transmembrane segment spans residues 135-155 (ILGALMSVITIWLVTGVLVYL). Residues 156 to 169 (ACERLIRPDYTIDG) are Lumenal, vesicle-facing. A helical transmembrane segment spans residues 170-190 (TVMLITSACALGANLVLALIL). The Cytoplasmic segment spans residues 191-222 (HQSGHGHSHAGGKHEHMASEYKPQTNASIRAA). The chain crosses the membrane as a helical span at residues 223 to 243 (FIHVIGDLFQSISVLISALII). The Zn(2+) site is built by histidine 225 and aspartate 229. Over 244-251 (YFKPEYKM) the chain is Lumenal, vesicle. A helical membrane pass occupies residues 252–272 (ADPICTFIFSIFVLITTVTVL). Residues 273 to 374 (RDLLTVLMEG…ECMFCYEPTQ (102 aa)) are Cytoplasmic-facing. Positions 306, 323, 350, 357, 366, and 369 each coordinate Zn(2+).

It belongs to the cation diffusion facilitator (CDF) transporter (TC 2.A.4) family. SLC30A subfamily. As to quaternary structure, homodimer.

It is found in the cytoplasmic vesicle. The protein resides in the secretory vesicle membrane. Its subcellular location is the cell membrane. It carries out the reaction Zn(2+)(in) + 2 H(+)(out) = Zn(2+)(out) + 2 H(+)(in). In terms of biological role, proton-coupled zinc ion antiporter mediating the entry of zinc into the lumen of pancreatic beta cell secretory granules, thereby regulating insulin secretion. This Xenopus tropicalis (Western clawed frog) protein is Proton-coupled zinc antiporter SLC30A8 (slc30a8).